The chain runs to 338 residues: UDP-glucose 4-epimerase (338 aa).

NAD(+) contacts are provided by residues 16-17 (YI), 37-42 (IDINHT), 59-60 (NL), 81-85 (FAAKT), threonine 126, tyrosine 153, lysine 157, and phenylalanine 181. Substrate is bound by residues threonine 126 and tyrosine 153. Tyrosine 153 (proton acceptor) is an active-site residue. Substrate is bound by residues asparagine 182, 198–199 (TL), 215–217 (FLY), arginine 230, and 294–297 (RAGD).

This sequence belongs to the NAD(P)-dependent epimerase/dehydratase family. As to quaternary structure, homodimer. NAD(+) serves as cofactor.

It catalyses the reaction UDP-alpha-D-glucose = UDP-alpha-D-galactose. The protein operates within carbohydrate metabolism; galactose metabolism. In terms of biological role, involved in the metabolism of galactose. Catalyzes the conversion of UDP-galactose (UDP-Gal) to UDP-glucose (UDP-Glc) through a mechanism involving the transient reduction of NAD. The sequence is that of UDP-glucose 4-epimerase (galE) from Mycoplasma pneumoniae (strain ATCC 29342 / M129 / Subtype 1) (Mycoplasmoides pneumoniae).